A 226-amino-acid polypeptide reads, in one-letter code: ATP synthase F(0) complex subunit a (226 aa).

The next 6 helical transmembrane spans lie at 13-33, 69-89, 97-117, 138-158, 179-199, and 201-221; these read VILGIPLIAIAMLDPFTLISW, WALLLTSLMLLLMSLNLLGLL, TQLSLNMGLAVPLWLATVIMA, IPVLIIIETISLFIRPLALGV, FVLLSIMPTVAILTSIVLFLL, and LLEIAVAMIQAYVFVLLLSLY.

Belongs to the ATPase A chain family. In terms of assembly, component of the ATP synthase complex composed at least of ATP5F1A/subunit alpha, ATP5F1B/subunit beta, ATP5MC1/subunit c (homooctomer), MT-ATP6/subunit a, MT-ATP8/subunit 8, ATP5ME/subunit e, ATP5MF/subunit f, ATP5MG/subunit g, ATP5MK/subunit k, ATP5MJ/subunit j, ATP5F1C/subunit gamma, ATP5F1D/subunit delta, ATP5F1E/subunit epsilon, ATP5PF/subunit F6, ATP5PB/subunit b, ATP5PD/subunit d, ATP5PO/subunit OSCP. ATP synthase complex consists of a soluble F(1) head domain (subunits alpha(3) and beta(3)) - the catalytic core - and a membrane F(0) domain - the membrane proton channel (subunits c, a, 8, e, f, g, k and j). These two domains are linked by a central stalk (subunits gamma, delta, and epsilon) rotating inside the F1 region and a stationary peripheral stalk (subunits F6, b, d, and OSCP). Interacts with DNAJC30; interaction is direct.

It localises to the mitochondrion inner membrane. It carries out the reaction H(+)(in) = H(+)(out). Functionally, subunit a, of the mitochondrial membrane ATP synthase complex (F(1)F(0) ATP synthase or Complex V) that produces ATP from ADP in the presence of a proton gradient across the membrane which is generated by electron transport complexes of the respiratory chain. ATP synthase complex consist of a soluble F(1) head domain - the catalytic core - and a membrane F(1) domain - the membrane proton channel. These two domains are linked by a central stalk rotating inside the F(1) region and a stationary peripheral stalk. During catalysis, ATP synthesis in the catalytic domain of F(1) is coupled via a rotary mechanism of the central stalk subunits to proton translocation. With the subunit c (ATP5MC1), forms the proton-conducting channel in the F(0) domain, that contains two crucial half-channels (inlet and outlet) that facilitate proton movement from the mitochondrial intermembrane space (IMS) into the matrix. Protons are taken up via the inlet half-channel and released through the outlet half-channel, following a Grotthuss mechanism. This chain is ATP synthase F(0) complex subunit a, found in Xenopus laevis (African clawed frog).